Reading from the N-terminus, the 190-residue chain is Membrane protein FAM174A (190 aa).

A signal peptide spans 1 to 29; it reads MPTRRGCSGPCHFLASAFVLLLLPALNQS. N27 and N83 each carry an N-linked (GlcNAc...) asparagine glycan. Residues 30 to 123 are Extracellular-facing; it reads VVLPSTVPRA…NPSDKPMTQR (94 aa). Residues 37 to 119 form a disordered region; that stretch reads PRAVQESKPL…AVSPNPSDKP (83 aa). Residues 124 to 144 traverse the membrane as a helical segment; that stretch reads ALTVLVVVSAAVLVYFVVRTV. Over 145 to 190 the chain is Cytoplasmic; that stretch reads RMRRRNRKTRRYGVLDTNIENMELTPLEQDDEDDDNTLFDANHPRR. A disordered region spans residues 168–190; it reads LTPLEQDDEDDDNTLFDANHPRR. The segment covering 172–181 has biased composition (acidic residues); the sequence is EQDDEDDDNT.

The protein belongs to the FAM174 family.

The protein localises to the membrane. The polypeptide is Membrane protein FAM174A (Fam174a) (Rattus norvegicus (Rat)).